The chain runs to 358 residues: Aromatic amino acid aminotransferase (358 aa).

At Lys-219 the chain carries N6-(pyridoxal phosphate)lysine.

It belongs to the class-II pyridoxal-phosphate-dependent aminotransferase family. As to quaternary structure, homodimer. It depends on pyridoxal 5'-phosphate as a cofactor.

It catalyses the reaction an aromatic L-alpha-amino acid + 2-oxoglutarate = an aromatic oxo-acid + L-glutamate. Its function is as follows. Aminotransferase that catalyzes the conversion of aromatic amino acids and 2-oxoglutarate into corresponding aromatic oxo acids and L-glutamate. The chain is Aromatic amino acid aminotransferase from Nocardia farcinica (strain IFM 10152).